A 669-amino-acid polypeptide reads, in one-letter code: DNA ligase (669 aa).

Residues 34-38 (DAEYD), 83-84 (SL), and glutamate 114 each bind NAD(+). The N6-AMP-lysine intermediate role is filled by lysine 116. Arginine 137, glutamate 171, lysine 287, and lysine 311 together coordinate NAD(+). Zn(2+)-binding residues include cysteine 405, cysteine 408, cysteine 423, and cysteine 428. The 79-residue stretch at 591–669 (NVESYFAGKT…EERFLQELNK (79 aa)) folds into the BRCT domain.

Belongs to the NAD-dependent DNA ligase family. LigA subfamily. The cofactor is Mg(2+). It depends on Mn(2+) as a cofactor.

The catalysed reaction is NAD(+) + (deoxyribonucleotide)n-3'-hydroxyl + 5'-phospho-(deoxyribonucleotide)m = (deoxyribonucleotide)n+m + AMP + beta-nicotinamide D-nucleotide.. Functionally, DNA ligase that catalyzes the formation of phosphodiester linkages between 5'-phosphoryl and 3'-hydroxyl groups in double-stranded DNA using NAD as a coenzyme and as the energy source for the reaction. It is essential for DNA replication and repair of damaged DNA. In Bacillus cereus (strain AH187), this protein is DNA ligase.